A 700-amino-acid chain; its full sequence is Dipeptidyl aminopeptidase 1 (700 aa).

An N-terminal signal peptide occupies residues 1-27; it reads MAKRIFSVSFLLVLLNVLHICIKFSVA. Asn-52, Asn-144, Asn-265, Asn-337, and Asn-373 each carry an N-linked (GlcNAc...) asparagine glycan. Positions 210–369 are excised as a propeptide; that stretch reads DNVNEIKHLD…SPKRELEINE (160 aa). 2 cysteine pairs are disulfide-bonded: Cys-395–Cys-446 and Cys-439–Cys-478. Residue Cys-398 is part of the active site. Thr-416 carries the post-translational modification Sulfothreonine. Residues Phe-450 and Tyr-452 each coordinate chloride. 3 N-linked (GlcNAc...) asparagine glycosylation sites follow: Asn-481, Asn-490, and Asn-507. Residue Tyr-549 participates in chloride binding. N-linked (GlcNAc...) asparagine glycosylation is present at Asn-615. Residues His-624 and Asn-648 contribute to the active site. Asn-667 carries an N-linked (GlcNAc...) asparagine glycan.

The protein belongs to the peptidase C1 family. Monomer. Chloride is required as a cofactor.

It localises to the vacuole lumen. It is found in the parasitophorous vacuole lumen. The catalysed reaction is Release of an N-terminal dipeptide, Xaa-Yaa-|-Zaa-, except when Xaa is Arg or Lys, or Yaa or Zaa is Pro.. Thiol protease that cleaves dipeptides from the N-terminus of protein substrates. Active against a broad range of dipeptide substrates composed of both polar and hydrophobic amino acids. Proline cannot occupy the P1 position and arginine or lysine cannot occupy the P2 position of the substrate. Involved in host hemoglobin degradation by generating dipeptides from hemoglobin-derived oligopeptides. The chain is Dipeptidyl aminopeptidase 1 from Plasmodium falciparum (isolate 3D7).